The sequence spans 296 residues: MTEGVPSAGSALPTPAMSSLPLAALNVRVRRRLSLFLNVRAPVAADWTVLAEAMDFEYLEIQQLEKYADPTSRLLDDWQRRPGASVGRLLELLAKLGREDVLMELGPSIEEDCQKYILKQQQEASEKPLQVDSIDSSIPRINDMAGITIRDDPLGQKPEYFDAFICYCPSDIEFVHEMIRQLEQTNYRLKLCVSDRDVLPGTCVWSIASELIEKRCRRMVVVVSDXYLQSKECDFQTKFALSLSPGAHQKRLIPIKYKPMKKEFPSILRFITVCDYTNPCTQNWFWTRLAKALSMP.

Residues 32-109 enclose the Death domain; it reads RLSLFLNVRA…DVLMELGPSI (78 aa). The tract at residues 110-155 is intermediate domain; it reads EEDCQKYILKQQQEASEKPLQVDSIDSSIPRINDMAGITIRDDPLG. The 135-residue stretch at 159-293 folds into the TIR domain; the sequence is EYFDAFICYC…WFWTRLAKAL (135 aa). Ser-244 carries the post-translational modification Phosphoserine.

Homodimer. Also forms heterodimers with TIRAP. Binds to TLR2, TLR4, IRAK1, IRAK2 and IRAK4 via their respective TIR domains. Interacts with IL18R1. Interacts with BMX, IL1RL1, IKBKE and IRF7. Interacts with LRRFIP1 and LRRFIP2; this interaction positively regulates Toll-like receptor (TLR) signaling in response to agonist. Interacts with FLII. LRRFIP1 and LRRFIP2 compete with FLII for MYD88-binding. Interacts with IRF1. Upon IL1B treatment, forms a complex with PELI1, IRAK1, IRAK4 and TRAF6; this complex recruits MAP3K7/TAK1, TAB1 and TAB2 to mediate NF-kappa-B activation. Direct binding of SMAD6 to PELI1 prevents the complex formation and hence negatively regulates IL1R-TLR signaling and eventually NF-kappa-B-mediated gene expression. May interact with PIK3AP1. Interacts (via TIR domain) with DHX9 (via H2A and OB-fold regions); this interaction is direct. Interacts with OTUD4 deubiquitinase; the interaction is direct. In terms of processing, ubiquitinated; undergoes 'Lys-63'-linked polyubiquitination. OTUD4 specifically hydrolyzes 'Lys-63'-linked polyubiquitinated MYD88. Deubiquitinated by USP3 that cleaves 'Lys-63'-linked ubiquitin chains leading to inhibition of MYD88-induced NF-kappa-B signaling. As to expression, detecetd in mesenteric lymph node, prescapular lymph node, lymphocytes, lung, kidney, skin and urinary bladder.

The protein resides in the cytoplasm. The protein localises to the nucleus. Functionally, adapter protein involved in the Toll-like receptor and IL-1 receptor signaling pathway in the innate immune response. Acts via IRAK1, IRAK2, IRF7 and TRAF6, leading to NF-kappa-B activation, cytokine secretion and the inflammatory response. Increases IL-8 transcription. Involved in IL-18-mediated signaling pathway. Activates IRF1 resulting in its rapid migration into the nucleus to mediate an efficient induction of IFN-beta, NOS2/INOS, and IL12A genes. Upon TLR8 activation by GU-rich single-stranded RNA (GU-rich RNA) derived from viruses, induces IL1B release through NLRP3 inflammasome activation. MyD88-mediated signaling in intestinal epithelial cells is crucial for maintenance of gut homeostasis and controls the expression of the antimicrobial lectin REG3G in the small intestine. The polypeptide is Myeloid differentiation primary response protein MyD88 (MYD88) (Ovis aries (Sheep)).